Reading from the N-terminus, the 181-residue chain is GTPase RhebL1 (181 aa).

Residues 30–36, G61, 117–120, and 147–148 each bind GTP; these read LEDYDPT, NKAD, and SA. The Effector region signature appears at 33–41; sequence YDPTVENTY. A Mg(2+)-binding site is contributed by T36. C178 carries the post-translational modification Cysteine methyl ester. C178 carries the S-farnesyl cysteine lipid modification. Positions 179–181 are cleaved as a propeptide — removed in mature form; sequence HLM.

The protein belongs to the small GTPase superfamily. Rheb family. Interacts with MTOR.

It is found in the endomembrane system. The protein localises to the cytoplasm. It catalyses the reaction GTP + H2O = GDP + phosphate + H(+). Binds GTP and exhibits intrinsic GTPase activity. May activate NF-kappa-B-mediated gene transcription. Promotes signal transduction through MTOR, activates RPS6KB1, and is a downstream target of the small GTPase-activating proteins TSC1 and TSC2. The polypeptide is GTPase RhebL1 (RHEBL1) (Bos taurus (Bovine)).